The sequence spans 309 residues: Serine/threonine-protein phosphatase 2A catalytic subunit beta isoform (309 aa).

Mn(2+)-binding residues include Asp57, His59, Asp85, and Asn117. His118 functions as the Proton donor in the catalytic mechanism. Residues His167 and His241 each contribute to the Mn(2+) site. At Tyr307 the chain carries Phosphotyrosine. Leu309 bears the Leucine methyl ester mark.

The protein belongs to the PPP phosphatase family. PP-1 subfamily. In terms of assembly, PP2A consists of a common heterodimeric core enzyme (composed of a 36 kDa catalytic subunit (subunit C) and a 65 kDa constant regulatory subunit (PR65) (subunit A)) that associates with a variety of regulatory subunits. Proteins that associate with the core dimer include three families of regulatory subunits B (the R2/B/PR55/B55, R3/B''/PR72/PR130/PR59 and R5/B'/B56 families), the 48 kDa variable regulatory subunit, viral proteins, and cell signaling molecules. Binds PPME1. May indirectly interact with SGO1, most probably through regulatory B56 subunits. Found in a complex with at least ARL2, PPP2CB, PPP2R1A, PPP2R2A, PPP2R5E and TBCD. Interacts with TBCD. Interacts with CTTNBP2NL. Interacts with PTPA. Part of the core of STRIPAK complexes composed of PP2A catalytic and scaffolding subunits, the striatins (PP2A regulatory subunits), the striatin-associated proteins MOB4, STRIP1 and STRIP2, PDCD10 and members of the STE20 kinases, such as STK24 and STK26. The cofactor is Mn(2+). In terms of processing, reversibly methyl esterified on Leu-309 by leucine carboxyl methyltransferase 1 (LCMT1) and protein phosphatase methylesterase 1 (PPME1). Carboxyl methylation influences the affinity of the catalytic subunit for the different regulatory subunits, thereby modulating the PP2A holoenzyme's substrate specificity, enzyme activity and cellular localization. Phosphorylation of either threonine (by autophosphorylation-activated protein kinase) or tyrosine results in inactivation of the phosphatase. Auto-dephosphorylation has been suggested as a mechanism for reactivation. Post-translationally, may be monoubiquitinated by NOSIP.

The protein resides in the cytoplasm. It is found in the nucleus. Its subcellular location is the chromosome. The protein localises to the centromere. It localises to the cytoskeleton. The protein resides in the spindle pole. The catalysed reaction is O-phospho-L-seryl-[protein] + H2O = L-seryl-[protein] + phosphate. It carries out the reaction O-phospho-L-threonyl-[protein] + H2O = L-threonyl-[protein] + phosphate. Its function is as follows. Catalytic subunit of protein phosphatase 2A (PP2A), a serine/threonine phosphatase involved in the regulation of a wide variety of enzymes, signal transduction pathways, and cellular events. PP2A can modulate the activity of phosphorylase B kinase, casein kinase 2, mitogen-stimulated S6 kinase, and MAP-2 kinase. Part of the striatin-interacting phosphatase and kinase (STRIPAK) complexes. STRIPAK complexes have critical roles in protein (de)phosphorylation and are regulators of multiple signaling pathways including Hippo, MAPK, nuclear receptor and cytoskeleton remodeling. Different types of STRIPAK complexes are involved in a variety of biological processes such as cell growth, differentiation, apoptosis, metabolism and immune regulation. In Bos taurus (Bovine), this protein is Serine/threonine-protein phosphatase 2A catalytic subunit beta isoform (PPP2CB).